A 441-amino-acid polypeptide reads, in one-letter code: Glutamate--tRNA ligase 2 (441 aa).

The 'HIGH' region motif lies at 9–19 (PSPTGYIHVGN). Positions 239–243 (ALSKR) match the 'KMSKS' region motif. Residue K242 coordinates ATP.

This sequence belongs to the class-I aminoacyl-tRNA synthetase family. Glutamate--tRNA ligase type 1 subfamily. Monomer.

The protein localises to the cytoplasm. It carries out the reaction tRNA(Glu) + L-glutamate + ATP = L-glutamyl-tRNA(Glu) + AMP + diphosphate. Its function is as follows. Catalyzes the attachment of glutamate to tRNA(Glu) in a two-step reaction: glutamate is first activated by ATP to form Glu-AMP and then transferred to the acceptor end of tRNA(Glu). This chain is Glutamate--tRNA ligase 2, found in Cereibacter sphaeroides (strain ATCC 17023 / DSM 158 / JCM 6121 / CCUG 31486 / LMG 2827 / NBRC 12203 / NCIMB 8253 / ATH 2.4.1.) (Rhodobacter sphaeroides).